The sequence spans 211 residues: Large ribosomal subunit protein uL4 (211 aa).

The tract at residues 41–87 (QAHARQGTASTLTRSEVRGGGRKPYKQKGTGRARQGSIRTPLRPGGG) is disordered. A compositionally biased stretch (basic residues) spans 60–71 (GGRKPYKQKGTG).

It belongs to the universal ribosomal protein uL4 family. Part of the 50S ribosomal subunit.

In terms of biological role, one of the primary rRNA binding proteins, this protein initially binds near the 5'-end of the 23S rRNA. It is important during the early stages of 50S assembly. It makes multiple contacts with different domains of the 23S rRNA in the assembled 50S subunit and ribosome. Functionally, forms part of the polypeptide exit tunnel. This chain is Large ribosomal subunit protein uL4, found in Parasynechococcus marenigrum (strain WH8102).